The primary structure comprises 233 residues: Protein YIPF6 (233 aa).

Over 1-84 (MAETEGFGDS…PKKSTTLLRD (84 aa)) the chain is Cytoplasmic. A helical transmembrane segment spans residues 85-105 (WDLWGPLVLCVSLALMLQGGN). The Lumenal segment spans residues 106 to 111 (ADSKDD). The helical transmembrane segment at 112-132 (GGPQFAEVFVIIWFGAVVITL) threads the bilayer. Residues 133 to 142 (NSKLLGGTIS) lie on the Cytoplasmic side of the membrane. Residues 143–163 (FFQSLCVLGYCILPLTVAMLV) traverse the membrane as a helical segment. Residues 164–180 (CRLVLLLSHTTASFIVR) are Lumenal-facing. A helical transmembrane segment spans residues 181–201 (LVVVTVMFAWSTFASTAFLAD). Over 202-208 (SQPPNRR) the chain is Cytoplasmic. The chain crosses the membrane as a helical span at residues 209-229 (ALAVYPIFLFYFVISWMVLTF). Residues 230-233 (NTVS) lie on the Lumenal side of the membrane.

It belongs to the YIP1 family.

The protein localises to the golgi apparatus membrane. This chain is Protein YIPF6 (yipf6), found in Xenopus tropicalis (Western clawed frog).